Reading from the N-terminus, the 435-residue chain is Xylose isomerase (435 aa).

Active-site residues include histidine 100 and aspartate 103. Positions 231, 267, 270, 295, 306, 308, and 338 each coordinate Mg(2+).

The protein belongs to the xylose isomerase family. In terms of assembly, homotetramer. Mg(2+) is required as a cofactor.

The protein localises to the cytoplasm. The enzyme catalyses alpha-D-xylose = alpha-D-xylulofuranose. The chain is Xylose isomerase from Brucella canis (strain ATCC 23365 / NCTC 10854 / RM-666).